A 444-amino-acid chain; its full sequence is Bifunctional protein GlmU (444 aa).

A pyrophosphorylase region spans residues 1–226 (MTDSTHRTTA…EAELAGVNSR (226 aa)). UDP-N-acetyl-alpha-D-glucosamine is bound by residues 13-16 (LAAG), Lys27, Gln75, and 80-81 (GT). Asp103 is a binding site for Mg(2+). UDP-N-acetyl-alpha-D-glucosamine-binding residues include Gly139, Glu153, Asn168, and Asn224. Asn224 serves as a coordination point for Mg(2+). Positions 227 to 247 (SELARAEATLQTRLRNAAMDA) are linker. The segment at 248–444 (GVTLVAPETV…QSLKARKEQG (197 aa)) is N-acetyltransferase. Residues Arg313 and Lys331 each contribute to the UDP-N-acetyl-alpha-D-glucosamine site. The active-site Proton acceptor is His343. UDP-N-acetyl-alpha-D-glucosamine contacts are provided by Tyr346 and Asn357. Acetyl-CoA is bound by residues Ala360, 366-367 (NY), Ser385, Ala403, and Arg420.

The protein in the N-terminal section; belongs to the N-acetylglucosamine-1-phosphate uridyltransferase family. It in the C-terminal section; belongs to the transferase hexapeptide repeat family. In terms of assembly, homotrimer. The cofactor is Mg(2+).

Its subcellular location is the cytoplasm. It catalyses the reaction alpha-D-glucosamine 1-phosphate + acetyl-CoA = N-acetyl-alpha-D-glucosamine 1-phosphate + CoA + H(+). It carries out the reaction N-acetyl-alpha-D-glucosamine 1-phosphate + UTP + H(+) = UDP-N-acetyl-alpha-D-glucosamine + diphosphate. It participates in nucleotide-sugar biosynthesis; UDP-N-acetyl-alpha-D-glucosamine biosynthesis; N-acetyl-alpha-D-glucosamine 1-phosphate from alpha-D-glucosamine 6-phosphate (route II): step 2/2. It functions in the pathway nucleotide-sugar biosynthesis; UDP-N-acetyl-alpha-D-glucosamine biosynthesis; UDP-N-acetyl-alpha-D-glucosamine from N-acetyl-alpha-D-glucosamine 1-phosphate: step 1/1. The protein operates within bacterial outer membrane biogenesis; LPS lipid A biosynthesis. Functionally, catalyzes the last two sequential reactions in the de novo biosynthetic pathway for UDP-N-acetylglucosamine (UDP-GlcNAc). The C-terminal domain catalyzes the transfer of acetyl group from acetyl coenzyme A to glucosamine-1-phosphate (GlcN-1-P) to produce N-acetylglucosamine-1-phosphate (GlcNAc-1-P), which is converted into UDP-GlcNAc by the transfer of uridine 5-monophosphate (from uridine 5-triphosphate), a reaction catalyzed by the N-terminal domain. This is Bifunctional protein GlmU from Gluconobacter oxydans (strain 621H) (Gluconobacter suboxydans).